The following is a 274-amino-acid chain: Outer surface protein A (274 aa).

Positions Met1–Ala16 are cleaved as a signal peptide. Cys17 carries N-palmitoyl cysteine lipidation. Cys17 carries the S-diacylglycerol cysteine lipid modification.

The protein belongs to the OspA lipoprotein family.

It is found in the cell outer membrane. The protein localises to the cell surface. This is Outer surface protein A from Borreliella burgdorferi (Lyme disease spirochete).